The primary structure comprises 326 residues: 4-hydroxythreonine-4-phosphate dehydrogenase (326 aa).

Threonine 132 serves as a coordination point for substrate. Positions 160, 205, and 260 each coordinate a divalent metal cation. Positions 268, 277, and 286 each coordinate substrate.

It belongs to the PdxA family. Homodimer. Zn(2+) serves as cofactor. It depends on Mg(2+) as a cofactor. The cofactor is Co(2+).

It is found in the cytoplasm. The catalysed reaction is 4-(phosphooxy)-L-threonine + NAD(+) = 3-amino-2-oxopropyl phosphate + CO2 + NADH. Its pathway is cofactor biosynthesis; pyridoxine 5'-phosphate biosynthesis; pyridoxine 5'-phosphate from D-erythrose 4-phosphate: step 4/5. Functionally, catalyzes the NAD(P)-dependent oxidation of 4-(phosphooxy)-L-threonine (HTP) into 2-amino-3-oxo-4-(phosphooxy)butyric acid which spontaneously decarboxylates to form 3-amino-2-oxopropyl phosphate (AHAP). In Stenotrophomonas maltophilia (strain K279a), this protein is 4-hydroxythreonine-4-phosphate dehydrogenase.